We begin with the raw amino-acid sequence, 275 residues long: MPRRAREYPEEGEFVVATVKRIHNYGAFLELDEYPGKEAFMHISEVASTWVRNIRDYLKEGQKVVAKVIRVDPRKGHIDLSLRRVTQQQRKAKLQEFKRAQKAENLLKLAAEKLGKDFETAWREVWVPLEEEWGEVYAAFEDAAKDGIDVLKGHVPDEWLPVLKEIIDNYVEVPTVTIDAEFEITVPKPNGVEIIKEALIRARDRANKEKDVEVKFTYLGAPRYRIDITAPDYYKAEEVLESIAEEILRVIKEAGGEATLLRKEKRIKKVKKRKK.

In terms of domain architecture, S1 motif spans 12-83 (GEFVVATVKR…RKGHIDLSLR (72 aa)).

Belongs to the eIF-2-alpha family. In terms of assembly, heterotrimer composed of an alpha, a beta and a gamma chain.

Its function is as follows. eIF-2 functions in the early steps of protein synthesis by forming a ternary complex with GTP and initiator tRNA. This is Translation initiation factor 2 subunit alpha (eif2a) from Pyrococcus abyssi (strain GE5 / Orsay).